Here is a 292-residue protein sequence, read N- to C-terminus: Formamidopyrimidine-DNA glycosylase (292 aa).

P2 acts as the Schiff-base intermediate with DNA in catalysis. Residue E3 is the Proton donor of the active site. K60 functions as the Proton donor; for beta-elimination activity in the catalytic mechanism. DNA-binding residues include H109, R128, and R173. The segment at 258 to 292 (NVYRRTGRECRKCGNLIERQKITGRSTHWCPNCQK) adopts an FPG-type zinc-finger fold. The active-site Proton donor; for delta-elimination activity is R282.

Belongs to the FPG family. As to quaternary structure, monomer. The cofactor is Zn(2+).

The enzyme catalyses Hydrolysis of DNA containing ring-opened 7-methylguanine residues, releasing 2,6-diamino-4-hydroxy-5-(N-methyl)formamidopyrimidine.. It carries out the reaction 2'-deoxyribonucleotide-(2'-deoxyribose 5'-phosphate)-2'-deoxyribonucleotide-DNA = a 3'-end 2'-deoxyribonucleotide-(2,3-dehydro-2,3-deoxyribose 5'-phosphate)-DNA + a 5'-end 5'-phospho-2'-deoxyribonucleoside-DNA + H(+). Functionally, involved in base excision repair of DNA damaged by oxidation or by mutagenic agents. Acts as a DNA glycosylase that recognizes and removes damaged bases. Has a preference for oxidized purines, such as 7,8-dihydro-8-oxoguanine (8-oxoG). Has AP (apurinic/apyrimidinic) lyase activity and introduces nicks in the DNA strand. Cleaves the DNA backbone by beta-delta elimination to generate a single-strand break at the site of the removed base with both 3'- and 5'-phosphates. In Prochlorococcus marinus (strain MIT 9301), this protein is Formamidopyrimidine-DNA glycosylase.